Consider the following 225-residue polypeptide: ATP-dependent dethiobiotin synthetase BioD (225 aa).

Position 12–17 (12–17 (EVGKTY)) interacts with ATP. Thr-16 provides a ligand contact to Mg(2+). The active site involves Lys-37. Ser-41 serves as a coordination point for substrate. ATP contacts are provided by residues Asp-52, 114–117 (EGAG), and 174–175 (NC). Asp-52 and Glu-114 together coordinate Mg(2+).

It belongs to the dethiobiotin synthetase family. In terms of assembly, homodimer. Requires Mg(2+) as cofactor.

The protein resides in the cytoplasm. It catalyses the reaction (7R,8S)-7,8-diammoniononanoate + CO2 + ATP = (4R,5S)-dethiobiotin + ADP + phosphate + 3 H(+). It participates in cofactor biosynthesis; biotin biosynthesis; biotin from 7,8-diaminononanoate: step 1/2. In terms of biological role, catalyzes a mechanistically unusual reaction, the ATP-dependent insertion of CO2 between the N7 and N8 nitrogen atoms of 7,8-diaminopelargonic acid (DAPA, also called 7,8-diammoniononanoate) to form a ureido ring. The chain is ATP-dependent dethiobiotin synthetase BioD from Francisella tularensis subsp. mediasiatica (strain FSC147).